Here is a 495-residue protein sequence, read N- to C-terminus: NADP/NAD-dependent aldehyde dehydrogenase PuuC (495 aa).

244–249 (GSTRTG) lines the NAD(+) pocket. Residues Glu267 and Cys302 contribute to the active site.

This sequence belongs to the aldehyde dehydrogenase family.

The enzyme catalyses an aldehyde + NADP(+) + H2O = a carboxylate + NADPH + 2 H(+). The catalysed reaction is an aldehyde + NAD(+) + H2O = a carboxylate + NADH + 2 H(+). It carries out the reaction 4-(gamma-L-glutamylamino)butanal + NADP(+) + H2O = 4-(gamma-L-glutamylamino)butanoate + NADPH + 2 H(+). It catalyses the reaction 4-(gamma-L-glutamylamino)butanal + NAD(+) + H2O = 4-(gamma-L-glutamylamino)butanoate + NADH + 2 H(+). It functions in the pathway amine and polyamine degradation; putrescine degradation; 4-aminobutanoate from putrescine: step 3/4. Its activity is regulated as follows. Lithium ions exhibits the highest inhibition (97%). To a lesser extent (5-20%), potassium, sodium, and ammonium ions also inhibit PuuC activity. Transition metals, such as copper and zinc ions inhibit PuuC activity by more than 90%. The presence of heavy metals (mercury, silver) or sodium hydrogensulfite in the reaction mixture completely inactivate PuuC; in contrast, disulfide reductants such as DTT and 2-mercaptoethanol significantly increase its activity by 75% and 27%, respectively. Functionally, catalyzes the oxidation of 3-hydroxypropionaldehyde (3-HPA) to 3-hydroxypropionic acid (3-HP). It acts preferentially with NAD but can also use NADP. 3-HPA appears to be the most suitable substrate for PuuC followed by isovaleraldehyde, propionaldehyde, butyraldehyde, and valeraldehyde. It might play a role in propionate and/or acetic acid metabolisms. Also involved in the breakdown of putrescine through the oxidation of gamma-Glu-gamma-aminobutyraldehyde to gamma-Glu-gamma-aminobutyrate (gamma-Glu-GABA). This Escherichia coli (strain K12) protein is NADP/NAD-dependent aldehyde dehydrogenase PuuC.